The primary structure comprises 460 residues: Transcription factor AP-2-beta (460 aa).

A Glycyl lysine isopeptide (Lys-Gly) (interchain with G-Cter in SUMO) cross-link involves residue K21. The tract at residues 30–139 is disordered; the sequence is HDGVPSHSSR…PQLSGLDPRR (110 aa). Polar residues predominate over residues 35–51; sequence SHSSRLSQLGSVSQGPY. Positions 121 to 132 are enriched in low complexity; sequence LLPQPRAALPQL. S258 is modified (phosphoserine; by PKA). Positions 435–460 are disordered; the sequence is NTTTNRHTSGEGPGSKTGDKEEKHRK. Residues 451–460 show a composition bias toward basic and acidic residues; that stretch reads TGDKEEKHRK.

It belongs to the AP-2 family. Binds DNA as a dimer. Can form homodimers or heterodimers with other AP-2 family members. Interacts with CITED4. Interacts with UBE2I. Interacts with KCTD1; this interaction represses transcription activation. Interacts with CITED2 (via C-terminus); the interaction stimulates TFAP2B-transcriptional activity. Post-translationally, sumoylated on Lys-21; which inhibits transcriptional activity.

The protein resides in the nucleus. Its function is as follows. Sequence-specific DNA-binding protein that interacts with inducible viral and cellular enhancer elements to regulate transcription of selected genes. AP-2 factors bind to the consensus sequence 5'-GCCNNNGGC-3' and activate genes involved in a large spectrum of important biological functions including proper eye, face, body wall, limb and neural tube development. They also suppress a number of genes including MCAM/MUC18, C/EBP alpha and MYC. AP-2-beta appears to be required for normal face and limb development and for proper terminal differentiation and function of renal tubular epithelia. This chain is Transcription factor AP-2-beta (TFAP2B), found in Canis lupus familiaris (Dog).